Here is a 503-residue protein sequence, read N- to C-terminus: Cytochrome P450 714C1 (503 aa).

At 1–6 (MEKLLA) the chain is on the lumenal side. The chain crosses the membrane as a helical; Signal-anchor for type III membrane protein span at residues 7-27 (LIVVLVILLSLALFYLCNILW). Residues 28-503 (LRAVKIRKKL…GLPLMVTKLP (476 aa)) lie on the Cytoplasmic side of the membrane. C450 is a heme binding site.

It belongs to the cytochrome P450 family. Heme serves as cofactor.

It is found in the membrane. In terms of biological role, probably not involved in gibberellin metabolism since over-expression of CYP714C1 in a heterologous system does not induce semi-dwarfism. This is Cytochrome P450 714C1 (CYP714C1) from Oryza sativa subsp. japonica (Rice).